A 123-amino-acid chain; its full sequence is Small ribosomal subunit protein uS12 (123 aa).

Asp89 carries the post-translational modification 3-methylthioaspartic acid.

It belongs to the universal ribosomal protein uS12 family. In terms of assembly, part of the 30S ribosomal subunit. Contacts proteins S8 and S17. May interact with IF1 in the 30S initiation complex.

With S4 and S5 plays an important role in translational accuracy. Its function is as follows. Interacts with and stabilizes bases of the 16S rRNA that are involved in tRNA selection in the A site and with the mRNA backbone. Located at the interface of the 30S and 50S subunits, it traverses the body of the 30S subunit contacting proteins on the other side and probably holding the rRNA structure together. The combined cluster of proteins S8, S12 and S17 appears to hold together the shoulder and platform of the 30S subunit. The protein is Small ribosomal subunit protein uS12 of Caulobacter sp. (strain K31).